The following is a 710-amino-acid chain: Pentatricopeptide repeat-containing protein At3g14330 (710 aa).

PPR repeat units lie at residues 166 to 196, 200 to 234, 235 to 269, 270 to 304, 305 to 331, 336 to 370, 371 to 401, 402 to 436, 437 to 467, and 473 to 503; these read NPKL…VTDS, TEKV…FIEP, GNFS…KEKV, DQVV…NVVT, WNSL…MQEE, SWAT…KEKP, DVPL…MLTK, DLAS…GVAP, DGIT…MKTE, and ALEH…MPFK. The tract at residues 508-583 is type E motif; that stretch reads IWGSLLNSCR…EAGCSWVQVK (76 aa). The tract at residues 584 to 615 is type E(+) motif; the sequence is DKIQIFVAGGGYEFRNSDEYKKVWTELQEAIE. Residues 616 to 710 are type DYW motif; that stretch reads KSGYSPNTSV…DGICSCKDYW (95 aa).

The protein belongs to the PPR family. PCMP-H subfamily.

This Arabidopsis thaliana (Mouse-ear cress) protein is Pentatricopeptide repeat-containing protein At3g14330 (PCMP-H57).